Consider the following 155-residue polypeptide: Small ribosomal subunit protein uS7 (155 aa).

This sequence belongs to the universal ribosomal protein uS7 family. In terms of assembly, part of the 30S ribosomal subunit. Contacts proteins S9 and S11.

Its function is as follows. One of the primary rRNA binding proteins, it binds directly to 16S rRNA where it nucleates assembly of the head domain of the 30S subunit. Is located at the subunit interface close to the decoding center, probably blocks exit of the E-site tRNA. In Cytophaga hutchinsonii (strain ATCC 33406 / DSM 1761 / CIP 103989 / NBRC 15051 / NCIMB 9469 / D465), this protein is Small ribosomal subunit protein uS7.